A 196-amino-acid polypeptide reads, in one-letter code: Ribonuclease HII (196 aa).

The RNase H type-2 domain maps to 1 to 196; sequence MVTIGVDEAG…FAPVAQLQLL (196 aa). The a divalent metal cation site is built by aspartate 7, glutamate 8, and aspartate 103.

Belongs to the RNase HII family. Requires Mn(2+) as cofactor. Mg(2+) serves as cofactor.

Its subcellular location is the cytoplasm. It carries out the reaction Endonucleolytic cleavage to 5'-phosphomonoester.. Functionally, endonuclease that specifically degrades the RNA of RNA-DNA hybrids. This chain is Ribonuclease HII, found in Novosphingobium aromaticivorans (strain ATCC 700278 / DSM 12444 / CCUG 56034 / CIP 105152 / NBRC 16084 / F199).